We begin with the raw amino-acid sequence, 1196 residues long: DNA-directed RNA polymerase subunit 2 (1196 aa).

Residues 1074–1095 form a disordered region; the sequence is SRARGPTQLLTRQAPEGRSRDG. Residues 1133 to 1154 form a C4-type zinc finger; that stretch reads CDSCGQFAHKVPEKKYYTCTGC.

Belongs to the RNA polymerase beta chain family.

It localises to the virion. The catalysed reaction is RNA(n) + a ribonucleoside 5'-triphosphate = RNA(n+1) + diphosphate. DNA-dependent RNA polymerase catalyzes the transcription of DNA into RNA using the four ribonucleoside triphosphates as substrates. In Acanthamoeba polyphaga mimivirus (APMV), this protein is DNA-directed RNA polymerase subunit 2 (RPO2).